The chain runs to 240 residues: Small ribosomal subunit protein uS2c (240 aa).

This sequence belongs to the universal ribosomal protein uS2 family.

The protein localises to the plastid. It localises to the chloroplast. The protein is Small ribosomal subunit protein uS2c (rps2) of Euglena gracilis.